Here is a 134-residue protein sequence, read N- to C-terminus: Fluoride-specific ion channel FluC 3 (134 aa).

4 helical membrane passes run 4-24, 35-55, 67-87, and 100-120; these read LIILVFVGGAFGAMCREFIML, MDIFVANIIAAFLLGLTTSFF, MVGTGIMGGLSTFSSFVFGAV, and ICYLVASLIVGFIAVELGLMI. Gly74 and Ser77 together coordinate Na(+).

This sequence belongs to the fluoride channel Fluc/FEX (TC 1.A.43) family.

Its subcellular location is the cell inner membrane. The catalysed reaction is fluoride(in) = fluoride(out). With respect to regulation, na(+) is not transported, but it plays an essential structural role and its presence is essential for fluoride channel function. Its function is as follows. Fluoride-specific ion channel. Important for reducing fluoride concentration in the cell, thus reducing its toxicity. The protein is Fluoride-specific ion channel FluC 3 of Yersinia pseudotuberculosis serotype I (strain IP32953).